The following is a 580-amino-acid chain: Acyl-coenzyme A synthetase ACSM4, mitochondrial (580 aa).

The N-terminal 22 residues, 1–22 (MKVLLRCQRLRFIWLAKPAGRH), are a transit peptide targeting the mitochondrion. ATP contacts are provided by residues 229 to 237 (TSGTTGSPK), 368 to 373 (EGYGQT), aspartate 455, arginine 470, and lysine 566.

It belongs to the ATP-dependent AMP-binding enzyme family. It depends on Mg(2+) as a cofactor. Mn(2+) serves as cofactor. Detected in adult olfactory epithelium.

It localises to the mitochondrion. The catalysed reaction is a medium-chain fatty acid + ATP + CoA = a medium-chain fatty acyl-CoA + AMP + diphosphate. The enzyme catalyses hexanoate + ATP + CoA = hexanoyl-CoA + AMP + diphosphate. It catalyses the reaction octanoate + ATP + CoA = octanoyl-CoA + AMP + diphosphate. It carries out the reaction decanoate + ATP + CoA = decanoyl-CoA + AMP + diphosphate. The catalysed reaction is dodecanoate + ATP + CoA = dodecanoyl-CoA + AMP + diphosphate. Catalyzes the activation of fatty acids by CoA to produce an acyl-CoA, the first step in fatty acid metabolism. Capable of activating medium-chain fatty acids with a preference for C6-12 fatty acids. The sequence is that of Acyl-coenzyme A synthetase ACSM4, mitochondrial (Acsm4) from Rattus norvegicus (Rat).